Consider the following 266-residue polypeptide: Hydroxyethylthiazole kinase (266 aa).

M39 is a substrate binding site. ATP is bound by residues K115 and T160. Residue G187 coordinates substrate.

Belongs to the Thz kinase family. Mg(2+) serves as cofactor.

It catalyses the reaction 5-(2-hydroxyethyl)-4-methylthiazole + ATP = 4-methyl-5-(2-phosphooxyethyl)-thiazole + ADP + H(+). It participates in cofactor biosynthesis; thiamine diphosphate biosynthesis; 4-methyl-5-(2-phosphoethyl)-thiazole from 5-(2-hydroxyethyl)-4-methylthiazole: step 1/1. Catalyzes the phosphorylation of the hydroxyl group of 4-methyl-5-beta-hydroxyethylthiazole (THZ). This chain is Hydroxyethylthiazole kinase, found in Staphylococcus aureus (strain MSSA476).